An 823-amino-acid polypeptide reads, in one-letter code: Protein ROOT HAIR DEFECTIVE 3 homolog 2 (823 aa).

The Cytoplasmic segment spans residues 1–688; the sequence is MEVPISGGGG…EAHRRSNNWL (688 aa). Positions 45 to 260 constitute a GB1/RHD3-type G domain; that stretch reads GLSYAVVSIV…IAPGGLAADR (216 aa). 55-62 serves as a coordination point for GTP; it reads GPQGSGKS. A coiled-coil region spans residues 226 to 246; the sequence is LSSYEEKENLFKEQVGQLRQR. The helical transmembrane segment at 689 to 709 threads the bilayer; it reads PPAWTVLLLAILGYNEFIFLL. Residues 710–712 lie on the Lumenal side of the membrane; sequence RNP. Residues 713 to 733 traverse the membrane as a helical segment; that stretch reads LYLLGLFVAFVVSYAAWLQYD. Residues 734-823 are Cytoplasmic-facing; sequence ITAYFRHGTL…SVGSNSDDES (90 aa). The interval 770 to 823 is disordered; the sequence is NQKSSSHPPRHRPPLHPQSFRNQAQQQSQAQVQYQAPSSLSSSSSVGSNSDDES. A compositionally biased stretch (low complexity) spans 786–823; the sequence is PQSFRNQAQQQSQAQVQYQAPSSLSSSSSVGSNSDDES.

The protein belongs to the TRAFAC class dynamin-like GTPase superfamily. GB1/RHD3 GTPase family. RHD3 subfamily.

The protein resides in the endoplasmic reticulum membrane. In terms of biological role, probable GTP-binding protein that may be involved in cell development. This is Protein ROOT HAIR DEFECTIVE 3 homolog 2 from Oryza sativa subsp. japonica (Rice).